The primary structure comprises 291 residues: Ribosomal RNA small subunit methyltransferase A (291 aa).

Asn-33, Val-35, Gly-60, Glu-81, Asp-111, and Asn-129 together coordinate S-adenosyl-L-methionine.

Belongs to the class I-like SAM-binding methyltransferase superfamily. rRNA adenine N(6)-methyltransferase family. RsmA subfamily.

Its subcellular location is the cytoplasm. The catalysed reaction is adenosine(1518)/adenosine(1519) in 16S rRNA + 4 S-adenosyl-L-methionine = N(6)-dimethyladenosine(1518)/N(6)-dimethyladenosine(1519) in 16S rRNA + 4 S-adenosyl-L-homocysteine + 4 H(+). In terms of biological role, specifically dimethylates two adjacent adenosines (A1518 and A1519) in the loop of a conserved hairpin near the 3'-end of 16S rRNA in the 30S particle. May play a critical role in biogenesis of 30S subunits. The chain is Ribosomal RNA small subunit methyltransferase A from Streptomyces griseus subsp. griseus (strain JCM 4626 / CBS 651.72 / NBRC 13350 / KCC S-0626 / ISP 5235).